We begin with the raw amino-acid sequence, 511 residues long: Glucans biosynthesis protein G (511 aa).

Residues 1 to 22 (MMKMRWLSAAVMLTLYTSSSWA) form the signal peptide.

Belongs to the OpgD/OpgG family.

The protein localises to the periplasm. The protein operates within glycan metabolism; osmoregulated periplasmic glucan (OPG) biosynthesis. Its function is as follows. Involved in the biosynthesis of osmoregulated periplasmic glucans (OPGs). The sequence is that of Glucans biosynthesis protein G from Escherichia coli O8 (strain IAI1).